The primary structure comprises 431 residues: Probable zinc metalloprotease Lema_P086240 (431 aa).

Asn-46 is a glycosylation site (N-linked (GlcNAc...) asparagine). Zn(2+) is bound by residues His-117, Asp-137, and Glu-170. Residue Asn-185 is glycosylated (N-linked (GlcNAc...) asparagine). Asp-197 lines the Zn(2+) pocket. N-linked (GlcNAc...) asparagine glycosylation is found at Asn-258, Asn-310, Asn-349, Asn-359, and Asn-369. The Fibronectin type-III domain occupies 344-431 (PGMPRNVTID…KSPAVYPFPG (88 aa)).

It belongs to the peptidase M28 family. M28B subfamily. Zn(2+) serves as cofactor.

The protein localises to the secreted. The protein is Probable zinc metalloprotease Lema_P086240 of Leptosphaeria maculans (strain JN3 / isolate v23.1.3 / race Av1-4-5-6-7-8) (Blackleg fungus).